Here is a 497-residue protein sequence, read N- to C-terminus: Squalene monooxygenase (497 aa).

FAD is bound by residues 29–30 (VV), 49–50 (ER), arginine 57, arginine 159, valine 175, aspartate 336, and methionine 349. The next 2 helical transmembrane spans lie at 434 to 454 (FLSG…TVAL) and 467 to 487 (LGFL…AKVF).

This sequence belongs to the squalene monooxygenase family. The cofactor is FAD.

Its subcellular location is the microsome membrane. The protein resides in the endoplasmic reticulum membrane. The catalysed reaction is squalene + reduced [NADPH--hemoprotein reductase] + O2 = (S)-2,3-epoxysqualene + oxidized [NADPH--hemoprotein reductase] + H2O + H(+). It participates in terpene metabolism; lanosterol biosynthesis; lanosterol from farnesyl diphosphate: step 2/3. In terms of biological role, catalyzes the stereospecific oxidation of squalene to (S)-2,3-epoxysqualene, and is considered to be a rate-limiting enzyme in steroid biosynthesis. This Eremothecium gossypii (strain ATCC 10895 / CBS 109.51 / FGSC 9923 / NRRL Y-1056) (Yeast) protein is Squalene monooxygenase (ERG1).